Reading from the N-terminus, the 425-residue chain is tRNA(Ile)-lysidine synthase (425 aa).

27–32 is an ATP binding site; that stretch reads SGGLDS.

It belongs to the tRNA(Ile)-lysidine synthase family.

The protein resides in the cytoplasm. It catalyses the reaction cytidine(34) in tRNA(Ile2) + L-lysine + ATP = lysidine(34) in tRNA(Ile2) + AMP + diphosphate + H(+). Its function is as follows. Ligates lysine onto the cytidine present at position 34 of the AUA codon-specific tRNA(Ile) that contains the anticodon CAU, in an ATP-dependent manner. Cytidine is converted to lysidine, thus changing the amino acid specificity of the tRNA from methionine to isoleucine. This is tRNA(Ile)-lysidine synthase from Streptococcus pneumoniae (strain JJA).